The primary structure comprises 1257 residues: Receptor tyrosine-protein kinase erbB-2 (1257 aa).

A signal peptide spans 1–22 (MELAAWCRWGFLLALLPPGIAG). Residues 23 to 654 (TQVCTGTDMK…PAEQRASPVT (632 aa)) are Extracellular-facing. The cysteines at positions 26 and 53 are disulfide-linked. 2 N-linked (GlcNAc...) asparagine glycosylation sites follow: asparagine 68 and asparagine 188. Disulfide bonds link cysteine 163/cysteine 193, cysteine 196/cysteine 205, cysteine 200/cysteine 213, cysteine 221/cysteine 228, cysteine 225/cysteine 236, cysteine 237/cysteine 245, cysteine 241/cysteine 253, cysteine 256/cysteine 265, cysteine 269/cysteine 296, cysteine 300/cysteine 312, cysteine 316/cysteine 332, cysteine 335/cysteine 339, cysteine 343/cysteine 368, cysteine 476/cysteine 506, cysteine 513/cysteine 522, and cysteine 517/cysteine 530. A glycan (N-linked (GlcNAc...) asparagine) is linked at asparagine 260. N-linked (GlcNAc...) asparagine glycosylation is present at asparagine 532. 8 disulfides stabilise this stretch: cysteine 533/cysteine 542, cysteine 546/cysteine 562, cysteine 565/cysteine 578, cysteine 569/cysteine 586, cysteine 589/cysteine 598, cysteine 602/cysteine 625, cysteine 628/cysteine 636, and cysteine 632/cysteine 644. Residue asparagine 573 is glycosylated (N-linked (GlcNAc...) asparagine). Asparagine 631 carries N-linked (GlcNAc...) asparagine glycosylation. The chain crosses the membrane as a helical span at residues 655–677 (FIIATVVGVLLFLILVVVVGILI). The interval 678–691 (KRRRQKIRKYTMRR) is required for interaction with KPNB1 and EEA1. The Nuclear localization signal motif lies at 678–691 (KRRRQKIRKYTMRR). Residues 678-1257 (KRRRQKIRKY…PEYLGLDVPV (580 aa)) are Cytoplasmic-facing. The region spanning 722-989 (LRKVKVLGSG…RMARDPQRFV (268 aa)) is the Protein kinase domain. Residues 728–736 (LGSGAFGTV) and lysine 755 each bind ATP. Aspartate 847 (proton acceptor) is an active-site residue. Tyrosine 879 is modified (phosphotyrosine). A disordered region spans residues 1029–1181 (QQGFFSPDPT…PKTLSPGKNG (153 aa)). Phosphoserine occurs at positions 1056, 1080, 1085, and 1109. Residue tyrosine 1114 is modified to Phosphotyrosine. Tyrosine 1141 carries the post-translational modification Phosphotyrosine; by autocatalysis. A compositionally biased stretch (pro residues) spans 1149–1163 (PQPPLTPEGPLPPVR). At threonine 1168 the chain carries Phosphothreonine. An interaction with PIK3C2B region spans residues 1197–1199 (EYL). Phosphotyrosine is present on tyrosine 1198. The segment at 1200–1257 (VPREGTASPPHPSPAFSPAFDNLYYWDQNSSEQGPPPSNFEGTPTAENPEYLGLDVPV) is disordered. Position 1250 is a phosphotyrosine; by autocatalysis (tyrosine 1250).

It belongs to the protein kinase superfamily. Tyr protein kinase family. EGF receptor subfamily. As to quaternary structure, homodimer. Heterodimer with EGFR, ERBB3 and ERBB4. Part of a complex with EGFR and either PIK3C2A or PIK3C2B. May interact with PIK3C2B when phosphorylated on Tyr-1198. Interacts with PRKCABP and PLXNB1. Interacts (when phosphorylated on Tyr-1250) with MEMO1. Interacts with MUC1. Interacts (when phosphorylated on Tyr-1141) with GRB7 (via SH2 domain). Interacts (when phosphorylated on Tyr-1250) with ERBIN Interacts with SRC, KPNB1, RANBP2, EEA1, CRM1, CLTC, PTK6, RPA194, MYOC and ACTB. Interacts with HSP90AA1 and HSP90AB1; the interaction suppresses ERBB2 kinase activity. Interacts with SORL1; this interaction regulates ERBB2 subcellular distribution by promoting its recycling after internalization from endosomes back to the plasma membrane, hence stimulates ERBB2-mediated signaling. Interacts with SH3BGRL. Interacts with ROR1. In terms of processing, autophosphorylated. Autophosphorylation occurs in trans, i.e. one subunit of the dimeric receptor phosphorylates tyrosine residues on the other subunit. Ligand-binding increases phosphorylation on tyrosine residues. Signaling via SEMA4C promotes phosphorylation at Tyr-1250. Dephosphorylated by PTPN12.

It localises to the cell membrane. It is found in the cell projection. Its subcellular location is the ruffle membrane. The protein localises to the early endosome. The protein resides in the cytoplasm. It localises to the perinuclear region. It is found in the nucleus. The catalysed reaction is L-tyrosyl-[protein] + ATP = O-phospho-L-tyrosyl-[protein] + ADP + H(+). Protein tyrosine kinase that is part of several cell surface receptor complexes, but that apparently needs a coreceptor for ligand binding. Essential component of a neuregulin-receptor complex, although neuregulins do not interact with it alone. GP30 is a potential ligand for this receptor. Regulates outgrowth and stabilization of peripheral microtubules (MTs). Upon ERBB2 activation, the MEMO1-RHOA-DIAPH1 signaling pathway elicits the phosphorylation and thus the inhibition of GSK3B at cell membrane. This prevents the phosphorylation of APC and CLASP2, allowing its association with the cell membrane. In turn, membrane-bound APC allows the localization of MACF1 to the cell membrane, which is required for microtubule capture and stabilization. Interacts (preferentially with the tyrosine phosphorylated form) with CPNE3; this interaction occurs at the cell membrane and is increased in a growth factor heregulin-dependent manner. Functionally, in the nucleus is involved in transcriptional regulation. Associates with the 5'-TCAAATTC-3' sequence in the PTGS2/COX-2 promoter and activates its transcription. Implicated in transcriptional activation of CDKN1A; the function involves STAT3 and SRC. Involved in the transcription of rRNA genes by RNA Pol I and enhances protein synthesis and cell growth. This Rattus norvegicus (Rat) protein is Receptor tyrosine-protein kinase erbB-2 (Erbb2).